Consider the following 444-residue polypeptide: S-locus-specific glycoprotein BS29-1 (444 aa).

Positions 1-28 (MRGVIPNYHHSYTLLFFVILVLFPHVFS) are cleaved as a signal peptide. The Bulb-type lectin domain occupies 31–159 (TLSPNEALTI…KTTALDRFMW (129 aa)). Asn43, Asn125, Asn180, Asn243, and Asn396 each carry an N-linked (GlcNAc...) asparagine glycan. The PAN domain occupies 356 to 437 (CGEGDGFLRM…GGQDLYLKVA (82 aa)). Disulfide bonds link Cys387–Cys412 and Cys395–Cys397.

As to expression, stigma.

In terms of biological role, involved in sporophytic self-incompatibility system (the inability of flowering plants to achieve self-fertilization). This Brassica oleracea var. alboglabra (Chinese kale) protein is S-locus-specific glycoprotein BS29-1 (SLSG).